The following is a 204-amino-acid chain: Guanylate kinase (204 aa).

The Guanylate kinase-like domain maps to 16 to 196 (AKVIIFSAPS…AKAHALKVIK (181 aa)). Residue 23 to 30 (APSGSGKS) coordinates ATP.

It belongs to the guanylate kinase family.

Its subcellular location is the cytoplasm. The enzyme catalyses GMP + ATP = GDP + ADP. In terms of biological role, essential for recycling GMP and indirectly, cGMP. The protein is Guanylate kinase of Bacteroides fragilis (strain ATCC 25285 / DSM 2151 / CCUG 4856 / JCM 11019 / LMG 10263 / NCTC 9343 / Onslow / VPI 2553 / EN-2).